The primary structure comprises 153 residues: Arginine regulator (153 aa).

The protein belongs to the ArgR family.

The protein localises to the cytoplasm. It participates in amino-acid degradation; L-arginine degradation via ADI pathway. Functionally, regulates the transcription of the arc operon, involved in arginine catabolism. The chain is Arginine regulator (argR1) from Lactiplantibacillus plantarum (strain ATCC BAA-793 / NCIMB 8826 / WCFS1) (Lactobacillus plantarum).